A 495-amino-acid chain; its full sequence is UDP-N-acetylmuramate--L-alanine ligase (495 aa).

An ATP-binding site is contributed by 153–159 (GTHGKTT).

Belongs to the MurCDEF family.

It is found in the cytoplasm. The catalysed reaction is UDP-N-acetyl-alpha-D-muramate + L-alanine + ATP = UDP-N-acetyl-alpha-D-muramoyl-L-alanine + ADP + phosphate + H(+). It functions in the pathway cell wall biogenesis; peptidoglycan biosynthesis. Functionally, cell wall formation. The protein is UDP-N-acetylmuramate--L-alanine ligase of Gloeothece citriformis (strain PCC 7424) (Cyanothece sp. (strain PCC 7424)).